We begin with the raw amino-acid sequence, 319 residues long: 4-hydroxy-3-methylbut-2-enyl diphosphate reductase (319 aa).

Residue Cys18 participates in [4Fe-4S] cluster binding. Positions 47 and 81 each coordinate (2E)-4-hydroxy-3-methylbut-2-enyl diphosphate. Residues His47 and His81 each contribute to the dimethylallyl diphosphate site. Positions 47 and 81 each coordinate isopentenyl diphosphate. Residue Cys103 coordinates [4Fe-4S] cluster. Residue His131 participates in (2E)-4-hydroxy-3-methylbut-2-enyl diphosphate binding. His131 provides a ligand contact to dimethylallyl diphosphate. His131 contributes to the isopentenyl diphosphate binding site. Glu133 (proton donor) is an active-site residue. Thr172 is a binding site for (2E)-4-hydroxy-3-methylbut-2-enyl diphosphate. Cys202 lines the [4Fe-4S] cluster pocket. 4 residues coordinate (2E)-4-hydroxy-3-methylbut-2-enyl diphosphate: Ser230, Ser231, Asn232, and Ser275. Residues Ser230, Ser231, Asn232, and Ser275 each contribute to the dimethylallyl diphosphate site. The isopentenyl diphosphate site is built by Ser230, Ser231, Asn232, and Ser275.

This sequence belongs to the IspH family. The cofactor is [4Fe-4S] cluster.

The catalysed reaction is isopentenyl diphosphate + 2 oxidized [2Fe-2S]-[ferredoxin] + H2O = (2E)-4-hydroxy-3-methylbut-2-enyl diphosphate + 2 reduced [2Fe-2S]-[ferredoxin] + 2 H(+). It catalyses the reaction dimethylallyl diphosphate + 2 oxidized [2Fe-2S]-[ferredoxin] + H2O = (2E)-4-hydroxy-3-methylbut-2-enyl diphosphate + 2 reduced [2Fe-2S]-[ferredoxin] + 2 H(+). The protein operates within isoprenoid biosynthesis; dimethylallyl diphosphate biosynthesis; dimethylallyl diphosphate from (2E)-4-hydroxy-3-methylbutenyl diphosphate: step 1/1. Its pathway is isoprenoid biosynthesis; isopentenyl diphosphate biosynthesis via DXP pathway; isopentenyl diphosphate from 1-deoxy-D-xylulose 5-phosphate: step 6/6. Functionally, catalyzes the conversion of 1-hydroxy-2-methyl-2-(E)-butenyl 4-diphosphate (HMBPP) into a mixture of isopentenyl diphosphate (IPP) and dimethylallyl diphosphate (DMAPP). Acts in the terminal step of the DOXP/MEP pathway for isoprenoid precursor biosynthesis. The chain is 4-hydroxy-3-methylbut-2-enyl diphosphate reductase from Methylocella silvestris (strain DSM 15510 / CIP 108128 / LMG 27833 / NCIMB 13906 / BL2).